Here is a 148-residue protein sequence, read N- to C-terminus: Ferredoxin-thioredoxin reductase catalytic chain, chloroplastic (148 aa).

Residues 1–35 (MKALQASTSYSFFSKSSSATLQRRTHRPQCVILSK) constitute a chloroplast transit peptide. Residue Cys-87 participates in [4Fe-4S] cluster binding. Cys-89 serves as the catalytic Nucleophile. Cys-89 and Cys-119 form a disulfide bridge. Residues Cys-106, Cys-108, and Cys-117 each coordinate [4Fe-4S] cluster.

The protein belongs to the ferredoxin thioredoxin reductase beta subunit family. As to quaternary structure, heterodimer of subunit A (variable subunit) and subunit B (catalytic subunit). Heterodimeric FTR forms a complex with ferredoxin and thioredoxin. [4Fe-4S] cluster serves as cofactor.

The protein localises to the plastid. It localises to the chloroplast. It carries out the reaction [thioredoxin]-disulfide + 2 reduced [2Fe-2S]-[ferredoxin] + 2 H(+) = [thioredoxin]-dithiol + 2 oxidized [2Fe-2S]-[ferredoxin]. Functionally, catalytic subunit of the ferredoxin-thioredoxin reductase (FTR), which catalyzes the two-electron reduction of thioredoxins by the electrons provided by reduced ferredoxin. This is Ferredoxin-thioredoxin reductase catalytic chain, chloroplastic from Spinacia oleracea (Spinach).